Here is a 353-residue protein sequence, read N- to C-terminus: Elongation factor Ts (353 aa).

The segment at 80–83 (TDFV) is involved in Mg(2+) ion dislocation from EF-Tu.

This sequence belongs to the EF-Ts family.

It is found in the cytoplasm. In terms of biological role, associates with the EF-Tu.GDP complex and induces the exchange of GDP to GTP. It remains bound to the aminoacyl-tRNA.EF-Tu.GTP complex up to the GTP hydrolysis stage on the ribosome. The polypeptide is Elongation factor Ts (Sulfurovum sp. (strain NBC37-1)).